The chain runs to 637 residues: Serine/threonine protein kinase ypkA (637 aa).

Low complexity predominate over residues T20 to T29. 2 disordered regions span residues T20–S63 and S104–A140. The segment covering V40–L61 has biased composition (polar residues). Residues S104 to S116 are compositionally biased toward low complexity. Over residues T117 to G136 the composition is skewed to polar residues. A Protein kinase domain is found at F294–F551. Residues V300–V308 and K323 contribute to the ATP site. D417 serves as the catalytic Proton acceptor. An AGC-kinase C-terminal domain is found at A552–A623. S593 and S612 each carry phosphoserine. Position 613 is a phosphotyrosine (Y613).

The protein belongs to the protein kinase superfamily. Ser/Thr protein kinase family. In terms of assembly, interacts with the sakA MAP kinase.

It carries out the reaction L-seryl-[protein] + ATP = O-phospho-L-seryl-[protein] + ADP + H(+). It catalyses the reaction L-threonyl-[protein] + ATP = O-phospho-L-threonyl-[protein] + ADP + H(+). In terms of biological role, serine/threonine protein kinase required for vegetative growth and conidiation. Important for fungal survival through the regulation of glycosphingolipid (GSL) biosynthesis and cross talks with MAP kinase pathways such as the cell wall integrity (CWI) and the high osmolarity glycerol (HOG) pathways. The protein is Serine/threonine protein kinase ypkA of Aspergillus fumigatus (strain ATCC MYA-4609 / CBS 101355 / FGSC A1100 / Af293) (Neosartorya fumigata).